Reading from the N-terminus, the 231-residue chain is NADH-ubiquinone oxidoreductase chain 4 (231 aa).

The next 6 helical transmembrane spans lie at 1–21 (PIAG…YGII), 34–54 (MFLP…LTCL), 61–80 (SLIA…AIII), 85–107 (GLAG…FCLA), 128–148 (ILPM…AIPP), and 169–189 (TIIL…HMFL).

The protein belongs to the complex I subunit 4 family.

The protein localises to the mitochondrion membrane. The enzyme catalyses a ubiquinone + NADH + 5 H(+)(in) = a ubiquinol + NAD(+) + 4 H(+)(out). In terms of biological role, core subunit of the mitochondrial membrane respiratory chain NADH dehydrogenase (Complex I) that is believed to belong to the minimal assembly required for catalysis. Complex I functions in the transfer of electrons from NADH to the respiratory chain. The immediate electron acceptor for the enzyme is believed to be ubiquinone. The polypeptide is NADH-ubiquinone oxidoreductase chain 4 (MT-ND4) (Gloydius blomhoffii (Mamushi)).